Consider the following 634-residue polypeptide: Nucleoside triphosphatase I (634 aa).

The Helicase ATP-binding domain occupies 41-203 (FLGLDSMNSL…ALLVNLLRPG (163 aa)). 54-61 (QETGVGKT) serves as a coordination point for ATP. The DEXH box signature appears at 140 to 143 (DECH). Residues 355–531 (SLYQALYEHS…EFSQLYRVLK (177 aa)) form the Helicase C-terminal domain. A binding to the cap-specific mRNA (nucleoside-2'-O-)-methyltransferase region spans residues 456–523 (DIFILDMTWN…EIIQNKAREF (68 aa)).

Belongs to the helicase family. NPH I subfamily. Monomer. Interacts (via C-terminus) with RAP94 (via N-terminus). Interacts with the cap-specific mRNA (nucleoside-2'-O-)-methyltransferase.

Its subcellular location is the virion. The enzyme catalyses a ribonucleoside 5'-triphosphate + H2O = a ribonucleoside 5'-diphosphate + phosphate + H(+). Functionally, DNA-dependent ATPase required for providing the needed energy to achieve the termination of early transcripts. Acts in concert with the RAP94 subunit of the virion RNA polymerase and the capping enzyme/VTF to catalyze release of UUUUUNU-containing nascent RNA from the elongation complex. NPH-I must bind ssDNA in order to exhibit ATPase activity. The protein is Nucleoside triphosphatase I (NPH1) of Homo sapiens (Human).